The following is a 293-amino-acid chain: MQSQQYSTPNLSLFNDGSAIIGEIRPIHGANQDVINDRALQLLQRTREHRNFLHRAHDDIRRYEPPTTQIDALENDEDENFYLNDMNTNEEYQSDRESVKSGLNSIANRYKNAVQSSPSDLDDIDFVGEEEQDLSYDESDYSDPLQEIDSNYRESPRRTTDKILKSSSKNYRRRENLGGEIRKIRQEKANKTATRYRPSDLALYEIRKYQQSTDLLISKIPFARLVKEVTDNFILENQHLQWHSMAILALQEASEAYLVGLLEHANLLALHAKRITLMKKDVQLARRIRGQFI.

Acidic residues predominate over residues glutamine 132–tyrosine 141. Residues glutamine 132–lysine 169 are disordered. Basic and acidic residues predominate over residues serine 150 to leucine 164. Residues arginine 157 to glutamine 291 form an H3-like region.

It belongs to the histone H3 family. In terms of assembly, component of centromeric nucleosomes, where DNA is wrapped around a histone octamer core. The octamer contains two molecules each of H2A, H2B, CSE4/CENPA and H4 assembled in one CSE4-H4 heterotetramer and two H2A-H2B heterodimers. Interacts with the inner kinetochore. Ubiquitinated. Is degraded through ubiquitin-mediated proteolysis when not protected by its association to the kinetochore.

The protein localises to the nucleus. It localises to the chromosome. Its subcellular location is the centromere. In terms of biological role, histone H3-like nucleosomal protein that is specifically found in centromeric nucleosomes. Replaces conventional H3 in the nucleosome core of centromeric chromatin that serves as an assembly site for the inner kinetochore. Required for recruitment and assembly of kinetochore proteins, mitotic progression and chromosome segregation. May serve as an epigenetic mark that propagates centromere identity through replication and cell division. The chain is Histone H3-like centromeric protein CSE4 (CSE4) from Monosporozyma servazzii (Yeast).